Here is a 587-residue protein sequence, read N- to C-terminus: DELLA protein RGA (587 aa).

The tract at residues methionine 1–lysine 26 is disordered. The DELLA motif motif lies at aspartate 44–alanine 48. An LEXLE motif motif is present at residues leucine 66–glutamate 70. Positions valine 89–proline 93 match the VHYNP motif motif. The segment at isoleucine 152 to glycine 181 is disordered. A compositionally biased stretch (polar residues) spans aspartate 153–valine 175. The GRAS domain occupies valine 212–lysine 581. The leucine repeat I (LRI) stretch occupies residues valine 219 to isoleucine 273. The tract at residues glutamine 292–glycine 357 is VHIID. The VHIID signature appears at valine 323–aspartate 327. The segment at glutamate 371–serine 403 is leucine repeat II (LRII). Positions valine 415–asparagine 502 are PFYRE. Residues leucine 423–leucine 427 carry the LXXLL motif motif. The tract at residues alanine 505–lysine 581 is SAW.

Belongs to the GRAS family. DELLA subfamily. Interacts directly with the GID2/SLY1 component of the SCF(GID2) complex. Interacts (via N-terminus) with GID1A, GID1B and GID1B (via N-terminus). Binds to bHLH transcription factors such as MYC2, PIF1, PIF4, PIF6 and SPT. Interacts with the BOI proteins BOI, BRG1, BRG2 and BRG3. Interacts with NFYC9. Interacts with TOPP4. Interacts with FLZ5. Binds to zinc finger proteins MGP/IDD3, IDD4, IDD5, BIB/IDD9 and JKD/IDD10 in the nucleus. Binds to and coactivates GAF1/IDD2 and ENY/IDD1. Binds to PDF2 and ATML1. Post-translationally, phosphorylated. Phosphorylation may increase the interaction with GID2. Gibberellin (GA) induces dephosphorylation of RGA by TOPP4 and subsequent degradation by the proteasomal pathway. In terms of processing, ubiquitinated. Upon GA application it is ubiquitinated by the SCF(GID2) complex, leading to its subsequent degradation. Post-translationally, O-fucosylated by SPY. O-fucosylation enhances RGA activity by promoting RGA binding to key transcription factors in brassinosteroid and light signaling pathways. In terms of tissue distribution, ubiquitously expressed. Expressed in roots, rosette leaves, bolting and mature stems, young and mature siliques, flower buds and influorescences.

The protein resides in the nucleus. Its function is as follows. Probable transcriptional regulator that acts as a repressor of the gibberellin (GA) signaling pathway. Probably acts by participating in large multiprotein complexes that repress transcription of GA-inducible genes. Positively regulates XERICO expression in seeds. Upon GA application, it is degraded by the proteasome, allowing the GA signaling pathway. Compared to other DELLA proteins, it is the most sensitive to GA application. No effect of the BOI proteins on its stability. Its activity is probably regulated by other phytohormones such as auxin and ethylene, attenuation of auxin transport delaying its GA-induced degradation. Involved in the regulation of seed dormancy and germination, including glucose-induced delay of seed germination. The protein is DELLA protein RGA of Arabidopsis thaliana (Mouse-ear cress).